A 369-amino-acid chain; its full sequence is Ribonuclease D (369 aa).

The 3'-5' exonuclease domain maps to 4–168; sequence EIITTTAQLH…CLEKLQQQLE (165 aa). One can recognise an HRDC domain in the interval 207 to 286; the sequence is DRQGLAIIKA…TQVISQDEST (80 aa).

Belongs to the RNase D family. A divalent metal cation serves as cofactor.

The protein localises to the cytoplasm. The catalysed reaction is Exonucleolytic cleavage that removes extra residues from the 3'-terminus of tRNA to produce 5'-mononucleotides.. In terms of biological role, exonuclease involved in the 3' processing of various precursor tRNAs. Initiates hydrolysis at the 3'-terminus of an RNA molecule and releases 5'-mononucleotides. The protein is Ribonuclease D of Psychromonas ingrahamii (strain DSM 17664 / CCUG 51855 / 37).